The chain runs to 396 residues: Elongation factor Tu (396 aa).

The tr-type G domain maps to 10-206 (KPHCNIGTIG…AVDAYIPQPE (197 aa)). The segment at 19–26 (GHVDHGKT) is G1. 19–26 (GHVDHGKT) lines the GTP pocket. Residue Thr-26 participates in Mg(2+) binding. The interval 60 to 64 (GITIS) is G2. The tract at residues 81–84 (DCPG) is G3. GTP contacts are provided by residues 81–85 (DCPGH) and 136–139 (NKCD). Residues 136 to 139 (NKCD) are G4. Positions 174–176 (SAL) are G5.

Belongs to the TRAFAC class translation factor GTPase superfamily. Classic translation factor GTPase family. EF-Tu/EF-1A subfamily. As to quaternary structure, monomer.

The protein resides in the cytoplasm. It catalyses the reaction GTP + H2O = GDP + phosphate + H(+). In terms of biological role, GTP hydrolase that promotes the GTP-dependent binding of aminoacyl-tRNA to the A-site of ribosomes during protein biosynthesis. The polypeptide is Elongation factor Tu (Rhodopseudomonas palustris (strain HaA2)).